Reading from the N-terminus, the 269-residue chain is Protein TIFY 11B (269 aa).

The region spanning 100–135 (PESGNSQLTIFFGGKVMVFNEFPEDKAKEIMEVAKE) is the Tify domain. The interval 160-181 (PDLNEPTSSGNNEDQETGQQHQ) is disordered. A compositionally biased stretch (polar residues) spans 164–181 (EPTSSGNNEDQETGQQHQ). A Jas motif is present at residues 186-210 (IARRASLHRFFAKRKDRAVARAPYQ). The Nuclear localization signal signature appears at 187 to 194 (ARRASLHR). The interval 209 to 269 (YQVNQHGSHL…QSSKNLELKL (61 aa)) is disordered. The segment covering 250–269 (MPMEVDKKEGQSSKNLELKL) has biased composition (basic and acidic residues).

Belongs to the TIFY/JAZ family. Homo- and heterodimer. Interacts with MYC2, AFPH2/NINJA, TIFY10A/JAZ1, TIFY10B/JAZ2, TIFY11A/JAZ5, TIFY5A/JAZ8, TIFY9/JAZ10 and TIFY3B/JAZ12. In terms of assembly, (Microbial infection) Interacts with the pathogenic Pseudomonas syringae HopZ1a protein. (Microbial infection) Acetylated by Pseudomonas syringae HopZ1a. Post-translationally, ubiquitinated. Targeted for degradation by the SCF(COI1) E3 ubiquitin ligase-proteasome pathway during jasmonate signaling.

Its subcellular location is the nucleus. It localises to the cell membrane. Repressor of jasmonate responses. This chain is Protein TIFY 11B, found in Arabidopsis thaliana (Mouse-ear cress).